A 243-amino-acid chain; its full sequence is Adenosylcobinamide-GDP ribazoletransferase (243 aa).

A run of 5 helical transmembrane segments spans residues 31–51, 55–75, 109–129, 135–155, and 188–208; these read LLFY…FNAL, APLL…SGGL, IAVV…VALI, IGLL…FLGT, and VVLA…CFYW.

Belongs to the CobS family. Mg(2+) serves as cofactor.

The protein resides in the cell inner membrane. The catalysed reaction is alpha-ribazole + adenosylcob(III)inamide-GDP = adenosylcob(III)alamin + GMP + H(+). The enzyme catalyses alpha-ribazole 5'-phosphate + adenosylcob(III)inamide-GDP = adenosylcob(III)alamin 5'-phosphate + GMP + H(+). The protein operates within cofactor biosynthesis; adenosylcobalamin biosynthesis; adenosylcobalamin from cob(II)yrinate a,c-diamide: step 7/7. Joins adenosylcobinamide-GDP and alpha-ribazole to generate adenosylcobalamin (Ado-cobalamin). Also synthesizes adenosylcobalamin 5'-phosphate from adenosylcobinamide-GDP and alpha-ribazole 5'-phosphate. This is Adenosylcobinamide-GDP ribazoletransferase from Pseudomonas syringae pv. tomato (strain ATCC BAA-871 / DC3000).